A 395-amino-acid chain; its full sequence is Major outer membrane porin, serovar F (395 aa).

Positions 1 to 22 (MKKLLKSVLVFAALSSASSLQA) are cleaved as a signal peptide.

It belongs to the chlamydial porin (CP) (TC 1.B.2) family. In terms of assembly, part of a disulfide cross-linked outer membrane complex (COMC) composed of the major outer membrane porin (MOMP), the small cysteine-rich protein (OmcA) and the large cysteine-rich periplasmic protein (OmcB).

The protein localises to the cell outer membrane. In terms of biological role, in elementary bodies (EBs, the infectious stage, which is able to survive outside the host cell) provides the structural integrity of the outer envelope through disulfide cross-links with the small cysteine-rich protein and the large cysteine-rich periplasmic protein. It has been described in publications as the Sarkosyl-insoluble COMC (Chlamydia outer membrane complex), and serves as the functional equivalent of peptidoglycan. Permits diffusion of specific solutes through the outer membrane. This is Major outer membrane porin, serovar F (ompA) from Chlamydia trachomatis.